A 234-amino-acid polypeptide reads, in one-letter code: PHD finger protein ING1 (234 aa).

Positions 129 to 166 are disordered; that stretch reads NNGKAGNAGEGGRGGRKKTRLATAASTAAASTGMTSSN. Positions 149–165 are enriched in low complexity; sequence LATAASTAAASTGMTSS. The segment at 178–227 adopts a PHD-type zinc-finger fold; sequence PTYCICNQVSFGEMVACDNNACKIEWFHFGCVGLKEQPKGKWYCPECATV. 8 residues coordinate Zn(2+): Cys181, Cys183, Cys194, Cys199, His205, Cys208, Cys221, and Cys224.

The protein belongs to the ING family. As to quaternary structure, interacts with H3K4me3 and to a lesser extent with H3K4me2. Ubiquitously expressed.

The protein localises to the nucleus. Functionally, histone-binding component that specifically recognizes H3 tails trimethylated on 'Lys-4' (H3K4me3), which mark transcription start sites of virtually all active genes. This Arabidopsis thaliana (Mouse-ear cress) protein is PHD finger protein ING1 (ING1).